An 86-amino-acid chain; its full sequence is Diphthamide biosynthesis protein 3 (86 aa).

Residues 4–60 (YHDEVEIEDFEYDEEEEMYYYPCPCGDRFQISKEELIEGEEVATCPSCSLVIKVIYD) enclose the DPH-type MB domain. The Fe cation site is built by Cys26, Cys28, Cys48, and Cys51.

It belongs to the DPH3 family. In terms of assembly, component of the 2-(3-amino-3-carboxypropyl)histidine synthase complex composed of Dph1, Dph2, Dph3 and a NADH-dependent reductase. It depends on Fe(2+) as a cofactor.

The enzyme catalyses [3Fe-4S](1+)-[protein] + Fe(2+)-[Dph3] = [3Fe-4S](0)-[protein] + Fe(3+)-[Dph3]. It catalyses the reaction 2 [3Fe-4S](0)-[protein] + 2 Fe(2+)-[Dph3] + NADH = 2 [4Fe-4S](1+)-[protein] + 2 [Dph3] + NAD(+) + H(+). It functions in the pathway protein modification; peptidyl-diphthamide biosynthesis. In terms of biological role, required for the first step of diphthamide biosynthesis, a post-translational modification of histidine which occurs in elongation factor 2. Dph1 and Dph2 transfer a 3-amino-3-carboxypropyl (ACP) group from S-adenosyl-L-methionine (SAM) to a histidine residue, the reaction is assisted by a reduction system comprising Dph3 and a NADH-dependent reductase. Acts as an electron donor to reduce the Fe-S cluster in Dph1-Dph2 keeping the [4Fe-4S] clusters in the active and reduced state. Restores iron to Dph1-Dph2 iron-sulfur clusters which have degraded from [4Fe-4S] to [3Fe-4S] by donating an iron atom to reform [4Fe-4S] clusters, in a manner dependent on the presence of elongation factor 2 and SAM. Associates with the elongator complex and is required for tRNA Wobble base modifications mediated by the elongator complex. The elongator complex is required for multiple tRNA modifications, including mcm5U (5-methoxycarbonylmethyl uridine), mcm5s 2U (5-methoxycarbonylmethyl-2-thiouridine), and ncm5U (5-carbamoylmethyl uridine). This chain is Diphthamide biosynthesis protein 3, found in Drosophila melanogaster (Fruit fly).